The primary structure comprises 331 residues: D-alanine--D-alanine ligase (331 aa).

Residues 112–314 (KRIWRSEGLP…YEDLCLRLLA (203 aa)) form the ATP-grasp domain. 138–193 (LQTLGAPMIVKPAREGSTIGLSKVHQAQQCASAYLLAARYDPEVLCEQFIAGDELT) contributes to the ATP binding site. Mg(2+) is bound by residues D267, E281, and N283.

The protein belongs to the D-alanine--D-alanine ligase family. Requires Mg(2+) as cofactor. The cofactor is Mn(2+).

The protein localises to the cytoplasm. The enzyme catalyses 2 D-alanine + ATP = D-alanyl-D-alanine + ADP + phosphate + H(+). It participates in cell wall biogenesis; peptidoglycan biosynthesis. Functionally, cell wall formation. This chain is D-alanine--D-alanine ligase, found in Verminephrobacter eiseniae (strain EF01-2).